The primary structure comprises 674 residues: MNKIILEDLKESNVPLYIPQILPHQLATLDFLNERSLKEKKSVLLFHKMGSGKTIISLLFSIIASIETKILIILPNTSIMDIWISKLYDSLLLLNKNDKYNLNNIEFTTRSRLNEELLGTNKNINDIITENIKKYDNYIIIIDEAHNFFGNASGELLIHIKQNSTARYVLLTGSPISNTIESLKDIVELLTNETFEYNKYIESAGNKVFQQRINKQGIELLKNKLTGLISYYDEDRKDIPSPIFQGNIKLLNYPVVLCPMSKLQEDNYNMISNQTENDMFIKLMMNVSLVALGDKENYTNFDLLMASNKQIFPNFYVSNGKFIGQELIDLNISSKLKYFMNSILTSPNAGKRFIYFANSTIGSTIIRSVMIANGISEYDKEIVNNFVCVNCLKERNCNNKECIPMKFVIITSKESNKGNNSYINKILSVFNEDVNENGSVIMFLFGSRIIAEAYTLKDIKEIWFLTVPETKSELEQCIARAIRSFAYKDKNTRVVVRICLATTPNALSNEISQIIEKYKDESLSDEEKTLLLNKFEMKLVNYAIDLPYDLRKQLYSEFKSEKAKVAYNIFINLSILTNNILNDNILKCFIIEKIRRYSYENSRYKLKDILSYIKKNLKFDYKNKIEDYVNEFVNDGVVVYNKSFGTCYIDWFKDDIVVKQIILEFNNYLLSYNY.

The region spanning E34–E193 is the Helicase ATP-binding domain. L45 to G52 contacts ATP. The short motif at Y135–Y138 is the DEXH box element.

This sequence belongs to the helicase family. VETF subfamily. In terms of assembly, heterodimer of a 70 kDa and a 82 kDa subunit. Part of the early transcription complex composed of ETF, RAP94, and the DNA-directed RNA polymerase.

Its subcellular location is the virion. Acts with RNA polymerase to initiate transcription from early gene promoters. Is recruited by the RPO-associated protein of 94 kDa (RAP94) to form the early transcription complex, which also contains the core RNA polymerase. ETF heterodimer binds to early gene promoters. This Melanoplus sanguinipes entomopoxvirus (MsEPV) protein is Early transcription factor 70 kDa subunit (VETFS).